Reading from the N-terminus, the 788-residue chain is Bifunctional purine biosynthetic protein ADE1 (788 aa).

The interval 1-429 (MSLRILLVGN…NRKDIAYKAF (429 aa)) is GARS. The region spanning 114–323 (KDFMKKHNIP…LAEVMLACVE (210 aa)) is the ATP-grasp domain. Residue 140–201 (VKKVGHRVVI…EEFLEGDELS (62 aa)) coordinates ATP. Mg(2+)-binding residues include E291 and N293. Positions 439–752 (ITYAQAGVSI…VVKQEKVAEV (314 aa)) are AIRS.

This sequence in the N-terminal section; belongs to the GARS family. In the C-terminal section; belongs to the AIR synthase family. It depends on Mg(2+) as a cofactor. Requires Mn(2+) as cofactor.

Its subcellular location is the cytoplasm. It is found in the cytosol. It catalyses the reaction 5-phospho-beta-D-ribosylamine + glycine + ATP = N(1)-(5-phospho-beta-D-ribosyl)glycinamide + ADP + phosphate + H(+). It carries out the reaction 2-formamido-N(1)-(5-O-phospho-beta-D-ribosyl)acetamidine + ATP = 5-amino-1-(5-phospho-beta-D-ribosyl)imidazole + ADP + phosphate + H(+). It participates in purine metabolism; IMP biosynthesis via de novo pathway; 5-amino-1-(5-phospho-D-ribosyl)imidazole from N(2)-formyl-N(1)-(5-phospho-D-ribosyl)glycinamide: step 2/2. The protein operates within purine metabolism; IMP biosynthesis via de novo pathway; N(1)-(5-phospho-D-ribosyl)glycinamide from 5-phospho-alpha-D-ribose 1-diphosphate: step 2/2. In terms of biological role, catalyzes the second and fifth step in the 'de novo' purine biosynthesis pathway; contains phosphoribosylamine--glycine ligase (GARS) and phosphoribosylformylglycinamidine cyclo-ligase (AIRS) activities. The sequence is that of Bifunctional purine biosynthetic protein ADE1 from Yarrowia lipolytica (strain CLIB 122 / E 150) (Yeast).